We begin with the raw amino-acid sequence, 58 residues long: U7-ctenitoxin-Pr1a (58 aa).

Intrachain disulfides connect Cys2/Cys16, Cys9/Cys22, Cys13/Cys48, Cys15/Cys40, Cys18/Cys55, and Cys24/Cys38.

As to expression, expressed by the venom gland.

The protein localises to the secreted. Probable neurotoxin. This Phoneutria reidyi (Brazilian Amazonian armed spider) protein is U7-ctenitoxin-Pr1a.